A 111-amino-acid polypeptide reads, in one-letter code: Universal stress protein B (111 aa).

The next 2 helical transmembrane spans lie at 1 to 21 (MIST…NMAR) and 90 to 110 (FLLT…MMMW).

This sequence belongs to the universal stress protein B family.

It is found in the cell inner membrane. This Pectobacterium atrosepticum (strain SCRI 1043 / ATCC BAA-672) (Erwinia carotovora subsp. atroseptica) protein is Universal stress protein B.